A 155-amino-acid polypeptide reads, in one-letter code: SsrA-binding protein (155 aa).

This sequence belongs to the SmpB family.

The protein localises to the cytoplasm. Functionally, required for rescue of stalled ribosomes mediated by trans-translation. Binds to transfer-messenger RNA (tmRNA), required for stable association of tmRNA with ribosomes. tmRNA and SmpB together mimic tRNA shape, replacing the anticodon stem-loop with SmpB. tmRNA is encoded by the ssrA gene; the 2 termini fold to resemble tRNA(Ala) and it encodes a 'tag peptide', a short internal open reading frame. During trans-translation Ala-aminoacylated tmRNA acts like a tRNA, entering the A-site of stalled ribosomes, displacing the stalled mRNA. The ribosome then switches to translate the ORF on the tmRNA; the nascent peptide is terminated with the 'tag peptide' encoded by the tmRNA and targeted for degradation. The ribosome is freed to recommence translation, which seems to be the essential function of trans-translation. The polypeptide is SsrA-binding protein (Alkaliphilus oremlandii (strain OhILAs) (Clostridium oremlandii (strain OhILAs))).